The following is a 165-amino-acid chain: Large ribosomal subunit protein uL10 (165 aa).

It belongs to the universal ribosomal protein uL10 family. In terms of assembly, part of the ribosomal stalk of the 50S ribosomal subunit. The N-terminus interacts with L11 and the large rRNA to form the base of the stalk. The C-terminus forms an elongated spine to which L12 dimers bind in a sequential fashion forming a multimeric L10(L12)X complex.

Its function is as follows. Forms part of the ribosomal stalk, playing a central role in the interaction of the ribosome with GTP-bound translation factors. The protein is Large ribosomal subunit protein uL10 of Serratia proteamaculans (strain 568).